A 452-amino-acid chain; its full sequence is Adenylosuccinate synthetase isozyme 1 (452 aa).

The interval 1-22 (MSGTRASNDRSSHPGGHKRPRY) is disordered. Residues 37-43 (GDEGKGK) and 65-67 (GHT) each bind GTP. The Proton acceptor role is filled by Asp38. Residues Asp38 and Gly65 each coordinate Mg(2+). Asp38 is a substrate binding site. IMP contacts are provided by residues 38–41 (DEGK), 63–66 (NAGH), Thr158, Arg172, Asn251, Thr266, and Arg330. His66 functions as the Proton donor in the catalytic mechanism. Substrate is bound at residue 326-332 (VTTGRKR). Residues Arg332, 358–360 (KLD), and 440–443 (GVGK) each bind GTP.

Belongs to the adenylosuccinate synthetase family. As to quaternary structure, homodimer. Requires Mg(2+) as cofactor.

The protein localises to the cytoplasm. The enzyme catalyses IMP + L-aspartate + GTP = N(6)-(1,2-dicarboxyethyl)-AMP + GDP + phosphate + 2 H(+). It functions in the pathway purine metabolism; AMP biosynthesis via de novo pathway; AMP from IMP: step 1/2. Its function is as follows. Component of the purine nucleotide cycle (PNC), which interconverts IMP and AMP to regulate the nucleotide levels in various tissues, and which contributes to glycolysis and ammoniagenesis. Catalyzes the first committed step in the biosynthesis of AMP from IMP. In Xenopus tropicalis (Western clawed frog), this protein is Adenylosuccinate synthetase isozyme 1 (adss1).